Here is a 91-residue protein sequence, read N- to C-terminus: Small ribosomal subunit protein uS19m (91 aa).

It belongs to the universal ribosomal protein uS19 family. In terms of assembly, component of the mitochondrial small ribosomal subunit (mt-SSU). Mature N.crassa 74S mitochondrial ribosomes consist of a small (37S) and a large (54S) subunit. The 37S small subunit contains a 16S ribosomal RNA (16S mt-rRNA) and 32 different proteins. The 54S large subunit contains a 23S rRNA (23S mt-rRNA) and 42 different proteins.

The protein resides in the mitochondrion. Its function is as follows. Component of the mitochondrial ribosome (mitoribosome), a dedicated translation machinery responsible for the synthesis of mitochondrial genome-encoded proteins, including at least some of the essential transmembrane subunits of the mitochondrial respiratory chain. The mitoribosomes are attached to the mitochondrial inner membrane and translation products are cotranslationally integrated into the membrane. The polypeptide is Small ribosomal subunit protein uS19m (rsm19) (Neurospora crassa (strain ATCC 24698 / 74-OR23-1A / CBS 708.71 / DSM 1257 / FGSC 987)).